We begin with the raw amino-acid sequence, 452 residues long: Adenylosuccinate synthetase (452 aa).

GTP is bound by residues 40 to 46 and 68 to 70; these read GDEGKGK and GHT. The active-site Proton acceptor is Asp-41. Residues Asp-41 and Gly-68 each contribute to the Mg(2+) site. IMP contacts are provided by residues 41–44, 66–69, Thr-158, Arg-172, Asn-250, Thr-265, and Arg-329; these read DEGK and NAGH. The active-site Proton donor is His-69. 325–331 serves as a coordination point for substrate; that stretch reads VTTKRKR. Residues Arg-331, 357–359, and 440–442 contribute to the GTP site; these read KLD and GVG.

It belongs to the adenylosuccinate synthetase family. As to quaternary structure, homodimer. Mg(2+) is required as a cofactor.

It localises to the cytoplasm. The enzyme catalyses IMP + L-aspartate + GTP = N(6)-(1,2-dicarboxyethyl)-AMP + GDP + phosphate + 2 H(+). The protein operates within purine metabolism; AMP biosynthesis via de novo pathway; AMP from IMP: step 1/2. Functionally, plays an important role in the de novo pathway and in the salvage pathway of purine nucleotide biosynthesis. Catalyzes the first committed step in the biosynthesis of AMP from IMP. This Drosophila grimshawi (Hawaiian fruit fly) protein is Adenylosuccinate synthetase.